Consider the following 197-residue polypeptide: FMN-dependent NADH:quinone oxidoreductase (197 aa).

Residues serine 10, 16-18 (SQS), 93-96 (MYNF), and 137-140 (TRGG) each bind FMN.

This sequence belongs to the azoreductase type 1 family. In terms of assembly, homodimer. FMN is required as a cofactor.

It catalyses the reaction 2 a quinone + NADH + H(+) = 2 a 1,4-benzosemiquinone + NAD(+). It carries out the reaction N,N-dimethyl-1,4-phenylenediamine + anthranilate + 2 NAD(+) = 2-(4-dimethylaminophenyl)diazenylbenzoate + 2 NADH + 2 H(+). Functionally, quinone reductase that provides resistance to thiol-specific stress caused by electrophilic quinones. In terms of biological role, also exhibits azoreductase activity. Catalyzes the reductive cleavage of the azo bond in aromatic azo compounds to the corresponding amines. This chain is FMN-dependent NADH:quinone oxidoreductase, found in Shewanella denitrificans (strain OS217 / ATCC BAA-1090 / DSM 15013).